The primary structure comprises 115 residues: NADH-ubiquinone oxidoreductase chain 3 (115 aa).

The next 3 membrane-spanning stretches (helical) occupy residues 3-23 (LMITLLTNFTLATLLVTIAFW), 55-75 (FFLVAITFLLFDLEIALLLPL), and 84-104 (LNTMLTMALLLIFLLAVSLAY).

Belongs to the complex I subunit 3 family. In terms of assembly, core subunit of respiratory chain NADH dehydrogenase (Complex I) which is composed of 45 different subunits. Interacts with TMEM186. Interacts with TMEM242.

It is found in the mitochondrion inner membrane. It catalyses the reaction a ubiquinone + NADH + 5 H(+)(in) = a ubiquinol + NAD(+) + 4 H(+)(out). Core subunit of the mitochondrial membrane respiratory chain NADH dehydrogenase (Complex I) which catalyzes electron transfer from NADH through the respiratory chain, using ubiquinone as an electron acceptor. Essential for the catalytic activity of complex I. The protein is NADH-ubiquinone oxidoreductase chain 3 of Ovis aries (Sheep).